We begin with the raw amino-acid sequence, 228 residues long: General odorant-binding protein 71 (228 aa).

Positions 1–20 are cleaved as a signal peptide; sequence MCGAIVLLLLVGTSPAPVEG. The segment at 50–131 is disordered; the sequence is TMGEWGQRDR…GNSSSSSSST (82 aa). Basic and acidic residues predominate over residues 55 to 72; sequence GQRDRNGEEQQMMRDYGR. Residues 83–99 show a composition bias toward low complexity; it reads GGQTSGSSSSGSAGEHS. Gly residues predominate over residues 111–120; the sequence is AGQGGNGTRS. Residues 121 to 131 are compositionally biased toward low complexity; it reads GGNSSSSSSST. Cystine bridges form between C138–C199 and C185–C208.

It belongs to the PBP/GOBP family.

Its subcellular location is the secreted. Its function is as follows. Present in the aqueous fluid surrounding olfactory sensory dendrites and are thought to aid in the capture and transport of hydrophobic odorants into and through this fluid. This Anopheles gambiae (African malaria mosquito) protein is General odorant-binding protein 71 (Obp71).